The primary structure comprises 297 residues: Aspartate carbamoyltransferase catalytic subunit (297 aa).

Residues Arg-49 and Thr-50 each coordinate carbamoyl phosphate. Lys-77 provides a ligand contact to L-aspartate. Positions 99, 129, and 132 each coordinate carbamoyl phosphate. L-aspartate-binding residues include Arg-162 and Arg-215. Carbamoyl phosphate is bound by residues Gly-256 and Pro-257.

Belongs to the aspartate/ornithine carbamoyltransferase superfamily. ATCase family. Heterododecamer (2C3:3R2) of six catalytic PyrB chains organized as two trimers (C3), and six regulatory PyrI chains organized as three dimers (R2).

It catalyses the reaction carbamoyl phosphate + L-aspartate = N-carbamoyl-L-aspartate + phosphate + H(+). The protein operates within pyrimidine metabolism; UMP biosynthesis via de novo pathway; (S)-dihydroorotate from bicarbonate: step 2/3. Catalyzes the condensation of carbamoyl phosphate and aspartate to form carbamoyl aspartate and inorganic phosphate, the committed step in the de novo pyrimidine nucleotide biosynthesis pathway. The protein is Aspartate carbamoyltransferase catalytic subunit of Legionella pneumophila (strain Corby).